Here is an 88-residue protein sequence, read N- to C-terminus: Acylphosphatase (88 aa).

Residues 3-88 form the Acylphosphatase-like domain; it reads RLVALVKGRV…EAGLKGFHVY (86 aa). Active-site residues include Arg18 and Asn36.

This sequence belongs to the acylphosphatase family.

It catalyses the reaction an acyl phosphate + H2O = a carboxylate + phosphate + H(+). The protein is Acylphosphatase (acyP) of Thermus thermophilus (strain ATCC BAA-163 / DSM 7039 / HB27).